A 327-amino-acid polypeptide reads, in one-letter code: Fe-S cluster assembly protein DRE2 (327 aa).

Residues 1–14 are compositionally biased toward polar residues; that stretch reads MSPATVTIDTTPDF. Disordered regions lie at residues 1–20 and 153–179; these read MSPA…GGAP and NKGE…AAAA. An N-terminal SAM-like domain region spans residues 17 to 144; that stretch reads GGAPHSTLLL…EKPAEEVAAV (128 aa). The tract at residues 145–214 is linker; it reads PLKFLKKKNK…EDELMTEEDL (70 aa). Residues 164–179 are compositionally biased toward low complexity; it reads PAAATQPTAPAPAAAA. 4 residues coordinate [2Fe-2S] cluster: Cys-224, Cys-235, Cys-238, and Cys-240. A fe-S binding site A region spans residues 224–240; the sequence is CAPKPGKKRRACKDCTC. Cys-290, Cys-293, Cys-301, and Cys-304 together coordinate [4Fe-4S] cluster. Short sequence motifs (cx2C motif) lie at residues 290-293 and 301-304; these read CGSC and CADC. The fe-S binding site B stretch occupies residues 290–304; it reads CGSCALGDAFRCADC.

It belongs to the anamorsin family. In terms of assembly, monomer. Interacts with TAH18. Interacts with MIA40. [2Fe-2S] cluster is required as a cofactor. The cofactor is [4Fe-4S] cluster.

It is found in the cytoplasm. Its subcellular location is the mitochondrion intermembrane space. Functionally, component of the cytosolic iron-sulfur (Fe-S) protein assembly (CIA) machinery required for the maturation of extramitochondrial Fe-S proteins. Part of an electron transfer chain functioning in an early step of cytosolic Fe-S biogenesis, facilitating the de novo assembly of a [4Fe-4S] cluster on the scaffold complex CFD1-NBP35. Electrons are transferred to DRE2 from NADPH via the FAD- and FMN-containing protein TAH18. TAH18-DRE2 are also required for the assembly of the diferric tyrosyl radical cofactor of ribonucleotide reductase (RNR), probably by providing electrons for reduction during radical cofactor maturation in the catalytic small subunit RNR2. The protein is Fe-S cluster assembly protein DRE2 of Pyricularia oryzae (strain 70-15 / ATCC MYA-4617 / FGSC 8958) (Rice blast fungus).